A 480-amino-acid chain; its full sequence is Glutamate--tRNA ligase 2 (480 aa).

The short motif at 15 to 25 (PSPTGYLHVGG) is the 'HIGH' region element. The short motif at 248 to 252 (RLSKR) is the 'KMSKS' region element. Position 251 (K251) interacts with ATP.

This sequence belongs to the class-I aminoacyl-tRNA synthetase family. Glutamate--tRNA ligase type 1 subfamily. As to quaternary structure, monomer.

The protein resides in the cytoplasm. It carries out the reaction tRNA(Glu) + L-glutamate + ATP = L-glutamyl-tRNA(Glu) + AMP + diphosphate. Its function is as follows. Catalyzes the attachment of glutamate to tRNA(Glu) in a two-step reaction: glutamate is first activated by ATP to form Glu-AMP and then transferred to the acceptor end of tRNA(Glu). The sequence is that of Glutamate--tRNA ligase 2 from Koribacter versatilis (strain Ellin345).